Consider the following 50-residue polypeptide: Bacterioferritin (50 aa).

The Ferritin-like diiron domain occupies 1–50; the sequence is MKGDPKVIDYLNKALRHELTAINQYWLHYRLLDNWGIKDLAKKWRAESIE. Glu-18 is a binding site for Fe cation.

Belongs to the bacterioferritin family. As to quaternary structure, homooligomer of 24 subunits, arranged as 12 dimers, that are packed together to form an approximately spherical molecule with a central cavity, in which large amounts of iron can be deposited. Heme b serves as cofactor.

The enzyme catalyses 4 Fe(2+) + O2 + 4 H(+) = 4 Fe(3+) + 2 H2O. The catalysed reaction is Fe(2+)(in) = Fe(2+)(out). In terms of biological role, iron-storage protein, whose ferroxidase center binds Fe(2+), oxidizes it using dioxygen to Fe(3+), and participates in the subsequent Fe(3+) oxide mineral core formation within the central cavity of the BFR protein shell. Its function is as follows. May act as one of the electron carriers in the reverse electron-transport system from cytochrome c-552 to NADP(+). The sequence is that of Bacterioferritin (bfr) from Nitrobacter winogradskyi (Nitrobacter agilis).